The following is a 141-amino-acid chain: Protein C19orf12 (141 aa).

Residues 40–60 traverse the membrane as a helical segment; that stretch reads FVGGLVGGPPGLAVGGAVGGL.

Belongs to the C19orf12 family.

The protein localises to the mitochondrion. The protein resides in the mitochondrion membrane. Its subcellular location is the endoplasmic reticulum. It localises to the cytoplasm. It is found in the cytosol. The polypeptide is Protein C19orf12 (C19orf12) (Homo sapiens (Human)).